The chain runs to 569 residues: Proton-coupled zinc antiporter SLC30A9, mitochondrial (569 aa).

Residues 1-68 (MLPGLAAAAA…IGTLSQVKLY (68 aa)) constitute a mitochondrion transit peptide. 5 consecutive transmembrane segments (helical) span residues 240-260 (VVMVAICINGLNCFFKFLAWI), 315-335 (GVGIFMMGAGLSWYHGVMGLL), 343-363 (LLWAYCILAGSLVSEGATLLV), 393-413 (VILLEDTAAVLGVIIAATCMG), and 425-445 (SLGSLGVGTLLGMVSAFLIYT). The short motif at 463–467 (LTELL) is the LXXLL motif element.

Belongs to the cation diffusion facilitator (CDF) transporter (TC 2.A.4) family. SLC30A subfamily. In terms of assembly, interacts with GRIP1, ESR1, AR and CTNNB1.

It localises to the mitochondrion membrane. It is found in the nucleus. The protein resides in the endoplasmic reticulum. The enzyme catalyses Zn(2+)(in) + 2 H(+)(out) = Zn(2+)(out) + 2 H(+)(in). Its function is as follows. Mitochondrial proton-coupled zinc ion antiporter mediating the export of zinc from the mitochondria and involved in zinc homeostasis, zinc mobilization as well as mitochondrial morphology and health. In nucleus, functions as a secondary coactivator for nuclear receptors by cooperating with p160 coactivators subtypes. Plays a role in transcriptional activation of Wnt-responsive genes. This chain is Proton-coupled zinc antiporter SLC30A9, mitochondrial (SLC30A9), found in Pongo abelii (Sumatran orangutan).